A 206-amino-acid polypeptide reads, in one-letter code: LexA repressor (206 aa).

The segment at residues 28–48 (RAEIATRLGFKSANAAEEHLK) is a DNA-binding region (H-T-H motif). Catalysis depends on for autocatalytic cleavage activity residues Ser123 and Lys160.

The protein belongs to the peptidase S24 family. As to quaternary structure, homodimer.

The catalysed reaction is Hydrolysis of Ala-|-Gly bond in repressor LexA.. In terms of biological role, represses a number of genes involved in the response to DNA damage (SOS response), including recA and lexA. In the presence of single-stranded DNA, RecA interacts with LexA causing an autocatalytic cleavage which disrupts the DNA-binding part of LexA, leading to derepression of the SOS regulon and eventually DNA repair. This is LexA repressor from Shewanella oneidensis (strain ATCC 700550 / JCM 31522 / CIP 106686 / LMG 19005 / NCIMB 14063 / MR-1).